Here is a 269-residue protein sequence, read N- to C-terminus: Formamidopyrimidine-DNA glycosylase (269 aa).

The Schiff-base intermediate with DNA role is filled by Pro-2. Glu-3 functions as the Proton donor in the catalytic mechanism. Residue Lys-57 is the Proton donor; for beta-elimination activity of the active site. Residues His-90, Arg-109, and Lys-150 each contribute to the DNA site. The FPG-type zinc-finger motif lies at Gln-235–Lys-269. Arg-259 acts as the Proton donor; for delta-elimination activity in catalysis.

This sequence belongs to the FPG family. As to quaternary structure, monomer. It depends on Zn(2+) as a cofactor.

It catalyses the reaction Hydrolysis of DNA containing ring-opened 7-methylguanine residues, releasing 2,6-diamino-4-hydroxy-5-(N-methyl)formamidopyrimidine.. It carries out the reaction 2'-deoxyribonucleotide-(2'-deoxyribose 5'-phosphate)-2'-deoxyribonucleotide-DNA = a 3'-end 2'-deoxyribonucleotide-(2,3-dehydro-2,3-deoxyribose 5'-phosphate)-DNA + a 5'-end 5'-phospho-2'-deoxyribonucleoside-DNA + H(+). In terms of biological role, involved in base excision repair of DNA damaged by oxidation or by mutagenic agents. Acts as a DNA glycosylase that recognizes and removes damaged bases. Has a preference for oxidized purines, such as 7,8-dihydro-8-oxoguanine (8-oxoG). Has AP (apurinic/apyrimidinic) lyase activity and introduces nicks in the DNA strand. Cleaves the DNA backbone by beta-delta elimination to generate a single-strand break at the site of the removed base with both 3'- and 5'-phosphates. The sequence is that of Formamidopyrimidine-DNA glycosylase from Salmonella newport (strain SL254).